The following is a 648-amino-acid chain: Macrolide export ATP-binding/permease protein MacB (648 aa).

An ABC transporter domain is found at 5–243; that stretch reads LELKDIRRSY…AGGTEPVVNT (239 aa). 41–48 is an ATP binding site; sequence GASGSGKS. 4 consecutive transmembrane segments (helical) span residues 273–293, 523–543, 576–596, and 611–631; these read LLTMLGIIIGIASVVSIVVVG, LFMTLVAVISLVVGGIGVMNI, AVLVCLVGGALGITLSLLIAF, and PLALLLAFLCSTVTGILFGWL.

Belongs to the ABC transporter superfamily. Macrolide exporter (TC 3.A.1.122) family. As to quaternary structure, homodimer. Part of the tripartite efflux system MacAB-TolC, which is composed of an inner membrane transporter, MacB, a periplasmic membrane fusion protein, MacA, and an outer membrane component, TolC. The complex forms a large protein conduit and can translocate molecules across both the inner and outer membranes. Interacts with MacA.

The protein resides in the cell inner membrane. In terms of biological role, part of the tripartite efflux system MacAB-TolC. MacB is a non-canonical ABC transporter that contains transmembrane domains (TMD), which form a pore in the inner membrane, and an ATP-binding domain (NBD), which is responsible for energy generation. Confers resistance against macrolides. This Escherichia coli O157:H7 protein is Macrolide export ATP-binding/permease protein MacB.